A 734-amino-acid chain; its full sequence is Photosystem I P700 chlorophyll a apoprotein A2 (734 aa).

The next 8 helical transmembrane spans lie at 46-69 (IFASHFGQLAIIFLWTSGNLFHVA), 135-158 (LYTGALFLLVGAAILLFAGWLHLQ), 175-199 (LNHHLAGLFGVSSLAWTGHLVHVAI), 273-291 (MAHHHLAIAVVFILAGHMY), 330-353 (LHFQLGLALASLGVITSLVAQHMY), 369-395 (SALYTHHQYIAGFIMTGAFAHGAIFFI), 417-439 (ALISHLSWVTLFLGFHTLGLYVH), and 517-535 (FLVHHAIALGLHTTTLILV). [4Fe-4S] cluster is bound by residues C559 and C568. 2 helical membrane passes run 575 to 596 (AFYLAVFWMLNTIGWTTFYWHW) and 643 to 665 (LSVWAWMFLFGHLVWATGFMFLI). Residues H654, M662, and Y670 each contribute to the chlorophyll a site. W671 serves as a coordination point for phylloquinone. A helical membrane pass occupies residues 707-727 (LVGLAHFSVGYVFTYAAFVIA).

Belongs to the PsaA/PsaB family. As to quaternary structure, the PsaA/B heterodimer binds the P700 chlorophyll special pair and subsequent electron acceptors. PSI consists of a core antenna complex that captures photons, and an electron transfer chain that converts photonic excitation into a charge separation. The eukaryotic PSI reaction center is composed of at least 11 subunits. Requires P700 is a chlorophyll a/chlorophyll a' dimer, A0 is one or more chlorophyll a, A1 is one or both phylloquinones and FX is a shared 4Fe-4S iron-sulfur center. as cofactor.

Its subcellular location is the plastid. The protein localises to the chloroplast thylakoid membrane. It carries out the reaction reduced [plastocyanin] + hnu + oxidized [2Fe-2S]-[ferredoxin] = oxidized [plastocyanin] + reduced [2Fe-2S]-[ferredoxin]. Functionally, psaA and PsaB bind P700, the primary electron donor of photosystem I (PSI), as well as the electron acceptors A0, A1 and FX. PSI is a plastocyanin/cytochrome c6-ferredoxin oxidoreductase, converting photonic excitation into a charge separation, which transfers an electron from the donor P700 chlorophyll pair to the spectroscopically characterized acceptors A0, A1, FX, FA and FB in turn. Oxidized P700 is reduced on the lumenal side of the thylakoid membrane by plastocyanin or cytochrome c6. The protein is Photosystem I P700 chlorophyll a apoprotein A2 of Nephroselmis olivacea (Green alga).